Here is a 491-residue protein sequence, read N- to C-terminus: Transcriptional regulatory protein dep1 (491 aa).

Disordered stretches follow at residues 1–74 (MTEN…LPSQ) and 155–301 (NSVE…DDEK). The span at 10–20 (IPHEILPKEPF) shows a compositional bias: basic and acidic residues. Polar residues-rich tracts occupy residues 54–63 (ALSNPETNAN) and 155–171 (NSVEPQMENTANITIVS). Over residues 175 to 186 (KESDFESEEKAT) the composition is skewed to basic and acidic residues. The span at 187 to 196 (NDNNGLIETN) shows a compositional bias: polar residues. Ser-204 is subject to Phosphoserine. Residues 205–215 (SEHEEEEDEES) show a composition bias toward acidic residues. 2 stretches are compositionally biased toward basic and acidic residues: residues 216-227 (NIERTEDSDHQI) and 282-301 (REIADRRSASEQAHEADDEK). Residue Ser-223 is modified to Phosphoserine.

As to quaternary structure, component of the RPD3C(L) complex.

It is found in the nucleus. In terms of biological role, component of the RPD3C(L) histone deacetylase complex (HDAC) responsible for the deacetylation of lysine residues on the N-terminal part of the core histones (H2A, H2B, H3 and H4). Histone deacetylation gives a tag for epigenetic repression and plays an important role in transcriptional regulation, cell cycle progression and developmental events. The protein is Transcriptional regulatory protein dep1 (dep1) of Schizosaccharomyces pombe (strain 972 / ATCC 24843) (Fission yeast).